Here is a 497-residue protein sequence, read N- to C-terminus: COP9 signalosome complex subunit 6 (497 aa).

Residues 21-162 (VALHPLPILE…LTIYESNLEI (142 aa)) enclose the MPN domain. Disordered stretches follow at residues 230 to 282 (ATED…KNRD), 324 to 350 (YLSSGDASSQQQQQQQQQQQTEGLDQP), and 435 to 497 (AKNS…RFDH). The span at 236 to 246 (SDKPLMKKVVD) shows a compositional bias: basic and acidic residues. Low complexity-rich tracts occupy residues 258–272 (SDDAAAEAPTTSSAA) and 333–343 (QQQQQQQQQQQ). Residues 440-453 (RREQASHGGGERFN) are compositionally biased toward basic and acidic residues. The segment covering 475–488 (VGEGSASGSGGSGP) has biased composition (gly residues).

This sequence belongs to the peptidase M67A family. CSN6 subfamily. As to quaternary structure, component of the COP9 signalosome (CSN) complex.

The protein localises to the cytoplasm. The protein resides in the nucleus. Functionally, component of the COP9 signalosome (CSN) complex that acts as an regulator of the ubiquitin (Ubl) conjugation pathway by mediating the deneddylation of the cullin subunit of SCF-type E3 ubiquitin-protein ligase complexes. The CSN complex is involved in the regulation of the circadian clock through its control of the stability of the SCF(FWD1) complex. This chain is COP9 signalosome complex subunit 6 (csn-6), found in Neurospora crassa (strain ATCC 24698 / 74-OR23-1A / CBS 708.71 / DSM 1257 / FGSC 987).